The chain runs to 320 residues: Ferrochelatase (320 aa).

Fe cation is bound by residues His194 and Glu275.

This sequence belongs to the ferrochelatase family. In terms of assembly, monomer.

It is found in the cytoplasm. The catalysed reaction is heme b + 2 H(+) = protoporphyrin IX + Fe(2+). The protein operates within porphyrin-containing compound metabolism; protoheme biosynthesis; protoheme from protoporphyrin-IX: step 1/1. Its function is as follows. Catalyzes the ferrous insertion into protoporphyrin IX. This is Ferrochelatase from Shigella boydii serotype 18 (strain CDC 3083-94 / BS512).